A 218-amino-acid chain; its full sequence is CTP-dependent diacylglycerol kinase 1 (218 aa).

Topologically, residues 1 to 19 (MSTKLTWSQWSKKHEIPRK) are lumenal. Residues 20–37 (ALHTSIGFFALLLQGCGY) traverse the membrane as a helical segment. A topological domain (cytoplasmic) is located at residue histidine 38. Residues 39–59 (AAQIIPVIEIGFIPAFTGDVI) traverse the membrane as a helical segment. The Lumenal portion of the chain corresponds to 60 to 88 (RFNWPAFSRLYNRVIGPLMRESEKNAWNG). A helical membrane pass occupies residues 89-109 (VIFYMIGVWIVLKVFPEEIAV). Residues 110 to 142 (MSVLLLSWCDTTASTVGRKWGKYTPKIAKNKSL) are Cytoplasmic-facing. A helical membrane pass occupies residues 143-163 (AGSLGAFVCGVFCCYVYWGLF). Topologically, residues 164-179 (RTGPDSLAAQSRIPFP) are lumenal. 2 helical membrane passes run 180–200 (WLCLINGFIGAFAEAMDVWGL) and 201–217 (DDNLVIPVVSACLLYLI). Methionine 218 is a topological domain (lumenal).

The protein belongs to the DGK1 family. Requires Ca(2+) as cofactor. Mg(2+) serves as cofactor.

It localises to the endoplasmic reticulum membrane. It is found in the nucleus membrane. The catalysed reaction is a 1,2-diacyl-sn-glycerol + CTP = a 1,2-diacyl-sn-glycero-3-phosphate + CDP + H(+). In terms of biological role, CTP-dependent diacylglycerol kinase that catalyzes the phosphorylation of diacylglycerol (DAG) to phosphatidate (PA). Controls phosphatidate levels at the nuclear envelope. Counteracts the activity of PA phosphatase ned1. May be involved in vesicle trafficking between the endoplasmic reticulum and the Golgi apparatus. Involved in pre-tRNA splicing. In Schizosaccharomyces pombe (strain 972 / ATCC 24843) (Fission yeast), this protein is CTP-dependent diacylglycerol kinase 1 (ptp4).